The primary structure comprises 700 residues: Polyribonucleotide nucleotidyltransferase (700 aa).

2 residues coordinate Mg(2+): Asp485 and Asp491. The region spanning 552 to 611 (PRITVIKINPEKIRDVIGKGGAVIRALTEETGTTIELEDDGTVKIASSNGEATKEAIRRI) is the KH domain. An S1 motif domain is found at 621 to 689 (GRIYNGKVIR…RQGRVRLSIK (69 aa)).

This sequence belongs to the polyribonucleotide nucleotidyltransferase family. In terms of assembly, component of the RNA degradosome, which is a multiprotein complex involved in RNA processing and mRNA degradation. It depends on Mg(2+) as a cofactor.

It is found in the cytoplasm. It catalyses the reaction RNA(n+1) + phosphate = RNA(n) + a ribonucleoside 5'-diphosphate. Its function is as follows. Involved in mRNA degradation. Catalyzes the phosphorolysis of single-stranded polyribonucleotides processively in the 3'- to 5'-direction. The sequence is that of Polyribonucleotide nucleotidyltransferase from Shewanella baltica (strain OS185).